The chain runs to 956 residues: MNLATTKAKLKSGAQAGVQALNKAGHAAKTGTVAAGKATVAGAKSLYLTIPKDYDIEKGGSLNELIKAADELGIARLQEDANNIESAKKSIDTVEKLLSFTQTGVAVSAKKLDELLQKYSSSQLAKSLGSSANIDSKLTKTNHILSTLSSFLGTALAGMDLDSLVKQGDASATDLAKASLDLINELVNNISNSVQSIEAFSEQLGRLGAAISQTKGLSGLGNKLQNLPNFGKANLALEMISGLLSGISAGFTLADKNASTEKKVAAGFELSNQVIGNVTKAISSYVLAQRAAAGLSTTGAVASLITASIMLAISPLAFMNAADKFKNASLIDEFAKQFKKFGYDGDSLLAEYQRGAGTIEASLTAINTALGAVSAGVSAAAVGSVVGSPVALLVAGVTGLISGILEASKQAMFESVANRLQSKILAWEKENGGKNYFENGYDARHAHYLERNLKLLSELNKELQAERVIAITQQRWDANIGELAGITKLGDRISSGKAYADAFEDGKKLDGASNVTVDTRTGVVDISNANGKKTQALHFTSPLLTAGTETRERVQNGKYSYINQLKFNRVKSWTVKDGEANSRLDFSKVIQHVAFNDEDGRLSGKTEEIALNVNAGSGNDDIFAGQGKMNVDGGTGHDRVFYSKDGGLGQVNVDGTKATEAGSYTVNRSINNGSFYHEVIKRQTTQVGKRTETLEYRDFELKRPEHGYQTTDTLKSVEEIVGSQFSDTFKGSKFADIFHGGDGNDTLEGNDGDDRLFGGNGDDHLYGGNGDDLLDGGKGNDVINGGDGNDVYISRKGDGNDTLYDSHGSDKLAFADADLSELTIERTAQGIMIKRNDGSGSINMAEWYKTLSQQNYHGNATDDKIEQIIGKNGDYITSEQIDKLLKDKQTGTITSAQLQQLAQENKSKSIDSGNLASTLNKLIESMASFGSRGATASNYLQPAHKSPQNVLAPSAV.

Positions 48 to 58 are cholesterol recognition/amino acid consensus (CRAC) region 1; that stretch reads LTIPKDYDIEK. Cholesterol recognition/amino acid consensus (CARC) region stretches follow at residues 280 to 287 and 340 to 348; these read KAISSYVL and KFGYDGDSL. The segment at 349–354 is cholesterol recognition/amino acid consensus (CRAC) region 2; sequence LAEYQR. The interval 444–453 is cholesterol recognition/amino acid consensus (CARC) region 3; the sequence is RHAHYLERNL. A lipid anchor (N6-myristoyl lysine) is attached at Lys558. One copy of the Hemolysin-type calcium-binding 1 repeat lies at 613–639; that stretch reads VNAGSGNDDIFAGQGKMNVDGGTGHDR. A lipid anchor (N6-myristoyl lysine) is attached at Lys689. Hemolysin-type calcium-binding repeat units follow at residues 722-756 and 757-791; these read GSQF…DDRL and FGGN…GNDV.

The protein belongs to the RTX prokaryotic toxin (TC 1.C.11) family. Myristoylated by RtxC; the toxin only becomes active when modified. Mainly myristoylated; a very minor fraction is acylated with hydroxymyristoyl, lauroyl and palmitoleyl chains fatty acyl groups. Fatty acylation is involved in binding to host membranes and promotes the irreversible insertion of RtxA into the host cell membrane.

The protein resides in the secreted. The protein localises to the host cell membrane. Bacterial cytolysin that attacks host cell membranes and causes cell rupture by forming a pore. Binds and permeabilizes target cells by forming cation-selective pores. Constitutes the key virulence cytotoxin of K.kingae. Binds cholesterol and oligosaccharides on the surface of host cells. Does not bind beta-2 integrin (ITGB2) on the host cell surface. The chain is Cytolysin RtxA from Kingella kingae.